A 160-amino-acid polypeptide reads, in one-letter code: NADH-quinone oxidoreductase subunit I (160 aa).

4Fe-4S ferredoxin-type domains are found at residues Leu51–Ala81 and Val91–Asn120. Positions 61, 64, 67, 71, 100, 103, 106, and 110 each coordinate [4Fe-4S] cluster.

Belongs to the complex I 23 kDa subunit family. NDH-1 is composed of 14 different subunits. Subunits NuoA, H, J, K, L, M, N constitute the membrane sector of the complex. [4Fe-4S] cluster is required as a cofactor.

The protein resides in the cell inner membrane. The catalysed reaction is a quinone + NADH + 5 H(+)(in) = a quinol + NAD(+) + 4 H(+)(out). Functionally, NDH-1 shuttles electrons from NADH, via FMN and iron-sulfur (Fe-S) centers, to quinones in the respiratory chain. The immediate electron acceptor for the enzyme in this species is believed to be ubiquinone. Couples the redox reaction to proton translocation (for every two electrons transferred, four hydrogen ions are translocated across the cytoplasmic membrane), and thus conserves the redox energy in a proton gradient. The polypeptide is NADH-quinone oxidoreductase subunit I (Anaplasma marginale (strain St. Maries)).